The sequence spans 384 residues: 23S rRNA (uracil(747)-C(5))-methyltransferase RlmC (384 aa).

Cysteine 3, cysteine 11, cysteine 14, and cysteine 87 together coordinate [4Fe-4S] cluster. Residues glutamine 212, phenylalanine 241, glutamate 262, and asparagine 309 each contribute to the S-adenosyl-L-methionine site. Cysteine 336 serves as the catalytic Nucleophile.

This sequence belongs to the class I-like SAM-binding methyltransferase superfamily. RNA M5U methyltransferase family. RlmC subfamily.

It catalyses the reaction uridine(747) in 23S rRNA + S-adenosyl-L-methionine = 5-methyluridine(747) in 23S rRNA + S-adenosyl-L-homocysteine + H(+). Catalyzes the formation of 5-methyl-uridine at position 747 (m5U747) in 23S rRNA. The protein is 23S rRNA (uracil(747)-C(5))-methyltransferase RlmC of Shewanella amazonensis (strain ATCC BAA-1098 / SB2B).